We begin with the raw amino-acid sequence, 158 residues long: Transcription elongation factor GreA (158 aa).

Residues 45-73 are a coiled coil; it reads AEYHAAREQQSFIEGRIKQLESELSHAEI.

Belongs to the GreA/GreB family.

Necessary for efficient RNA polymerase transcription elongation past template-encoded arresting sites. The arresting sites in DNA have the property of trapping a certain fraction of elongating RNA polymerases that pass through, resulting in locked ternary complexes. Cleavage of the nascent transcript by cleavage factors such as GreA or GreB allows the resumption of elongation from the new 3'terminus. GreA releases sequences of 2 to 3 nucleotides. In Xanthomonas axonopodis pv. citri (strain 306), this protein is Transcription elongation factor GreA.